Here is a 66-residue protein sequence, read N- to C-terminus: DNA gyrase inhibitor YacG (66 aa).

Zn(2+)-binding residues include Cys-10, Cys-13, Cys-29, and Cys-33.

The protein belongs to the DNA gyrase inhibitor YacG family. As to quaternary structure, interacts with GyrB. Requires Zn(2+) as cofactor.

Its function is as follows. Inhibits all the catalytic activities of DNA gyrase by preventing its interaction with DNA. Acts by binding directly to the C-terminal domain of GyrB, which probably disrupts DNA binding by the gyrase. This Edwardsiella ictaluri (strain 93-146) protein is DNA gyrase inhibitor YacG.